Here is a 461-residue protein sequence, read N- to C-terminus: D-phenylhydantoinase (461 aa).

Residues histidine 59, histidine 61, and lysine 151 each contribute to the a divalent metal cation site. Position 151 is an N6-carboxylysine (lysine 151). Substrate is bound at residue tyrosine 156. The a divalent metal cation site is built by histidine 182 and histidine 239. Substrate is bound at residue serine 286. Aspartate 313 is a binding site for a divalent metal cation. Position 335 (asparagine 335) interacts with substrate.

This sequence belongs to the metallo-dependent hydrolases superfamily. Hydantoinase/dihydropyrimidinase family. In terms of assembly, homotetramer. A divalent metal cation is required as a cofactor. In terms of processing, carboxylation allows a single lysine to coordinate two divalent metal cations.

It catalyses the reaction D-5-phenylhydantoin + H2O = N-carbamoyl-D-phenylglycine + H(+). Its function is as follows. Catalyzes the stereospecific hydrolysis of the cyclic amide bond of D-hydantoin derivatives with an aromatic side chains at the 5'-position. Has no activity on dihydropyrimidines. The physiological function is unknown. The chain is D-phenylhydantoinase from Escherichia coli (strain UTI89 / UPEC).